The chain runs to 114 residues: Ribonuclease P protein component (114 aa).

This sequence belongs to the RnpA family. Consists of a catalytic RNA component (M1 or rnpB) and a protein subunit.

The catalysed reaction is Endonucleolytic cleavage of RNA, removing 5'-extranucleotides from tRNA precursor.. Its function is as follows. RNaseP catalyzes the removal of the 5'-leader sequence from pre-tRNA to produce the mature 5'-terminus. It can also cleave other RNA substrates such as 4.5S RNA. The protein component plays an auxiliary but essential role in vivo by binding to the 5'-leader sequence and broadening the substrate specificity of the ribozyme. The sequence is that of Ribonuclease P protein component from Exiguobacterium sp. (strain ATCC BAA-1283 / AT1b).